The sequence spans 1037 residues: MNGTRAAPGVTPSEVAMNGKNEMEVVEQAPIPKTNANIGLKSPVNTVEDVNQEDSTNSPPPIPHVEINQMPLSMIIRNLTVYTVKEISQYMKTTVHMNTADTSTARKMRFLNLLIFIRNQFLKLYVLIKWCRTIKENNFNIMIDLLNWFRGTNMTVNNCIWALKSTLESTTNAKLPNVDLVTALEVLTLGRPNLPTHDFKLSGENNEYETVNGQLRIPTKLIMQRLKDLNIIVMIKISSIDIPKQFNNYEIRDGRVYITVPGEFEIQLSTIDRHSPFFFVDFKLLFAGTDSLFNKPRLEKIINDVLLRNKKPLYSLYSLLHRYVLTLQLYMIHLELLNLENDGKFSGGNLVHSYNAKKSLIVMKYWRNGKLGNKTKIIIGVDRKSEDLVLKWDNENAKQSMHMPLVYTHVVGNVEAILDEIMFNHSRLIRADLLSRGVFQEDEEDPSVLLFQLPTTCLSTAPIQLKIDLVSGVFYFKNPSPLLLEYVSQINRAETPEDLTSVLQRLKLDKIVHIIRNMFDKTGWVCSKVIKLDNPIATSVNSEEIKTNLLQNDMFIRLASWPVNWYLILTIVSSNSSCIIEKRIGKIISTSGKWKVQYLDTTNVLSLKLESITYKKIISLQKSTLNRIINHTLIDSLNHLKTRNKVCSPDLIVNSLPKHLLEDEVDDKVPHSIENYHHISLITIELESFLEGSKALSGILESTMFLRMDYKKFEIRLYGKFKRSTMAFHCQCDDLLINFVEREPLAFYLAETFTNLNEIVQYLTLFRQKLMQLVVLTDVVERLHKNFASDHFKIISLKPNEVTFKYLKSSTDDKDCTINIITNEQTIKNLTVKLSDKNPQHIIQPFIDNQQFEYQFIFSYLQFTSPLFCCLKEILDESNKEERLENAKEESDSTRTSTSITLGLHNLSEYQLVYFNPELGYKITLILELKEVSINGKKKIQFYVHFSQDEHITTKSSAYPLIHQVRNEIFMLEMKKRDGTPSLIKLDNTRNVIRLGNGISCDSDSIVEVLMSINKILLGDSKSAPQITTVPPTNKTI.

It belongs to the Mediator complex subunit 14 family. As to quaternary structure, component of the Mediator complex.

Its subcellular location is the nucleus. In terms of biological role, component of the Mediator complex, a coactivator involved in the regulated transcription of nearly all RNA polymerase II-dependent genes. Mediator functions as a bridge to convey information from gene-specific regulatory proteins to the basal RNA polymerase II transcription machinery. Mediator is recruited to promoters by direct interactions with regulatory proteins and serves as a scaffold for the assembly of a functional preinitiation complex with RNA polymerase II and the general transcription factors. The protein is Mediator of RNA polymerase II transcription subunit 14 (RGR1) of Candida glabrata (strain ATCC 2001 / BCRC 20586 / JCM 3761 / NBRC 0622 / NRRL Y-65 / CBS 138) (Yeast).